Reading from the N-terminus, the 766-residue chain is General transcription and DNA repair factor IIH helicase/translocase subunit XPB2 (766 aa).

A disordered region spans residues 1 to 56 (MGNDERKRPTKKMKYGGKDDQKMKNIQNVEDYYDDADEDSRDGEGEEKRRDFTDLE). Positions 31 to 41 (DYYDDADEDSR) are enriched in acidic residues. Over residues 42 to 56 (DGEGEEKRRDFTDLE) the composition is skewed to basic and acidic residues. Positions 293-455 (MFGNGRARSG…DLNFLIGPKL (163 aa)) constitute a Helicase ATP-binding domain. 306–313 (LPCGAGKS) contributes to the ATP binding site. A DEVH box motif is present at residues 408-411 (DEVH). A Helicase C-terminal domain is found at 510-676 (RACEFLIRFH…SLPPPDAGSS (167 aa)). A compositionally biased stretch (polar residues) spans 739–748 (SGRQKSGNQS). A disordered region spans residues 739–766 (SGRQKSGNQSKKPKDPTKRHNIFKKRYV). The short motif at 749-765 (KKPKDPTKRHNIFKKRY) is the Nuclear localization signal element. Residues 757-766 (RHNIFKKRYV) are compositionally biased toward basic residues.

Belongs to the helicase family. RAD25/XPB subfamily. As to quaternary structure, component of the 7-subunit TFIIH core complex composed of XPB, XPD, TFB1/GTF2H1, GTF2H2/P44, TFB4/GTF2H3, TFB2/GTF2H4 and TFB5/GTF2H5, which is active in NER. The core complex associates with the 3-subunit CDK-activating kinase (CAK) module composed of CYCH1/cyclin H1, CDKD and MAT1/At4g30820 to form the 10-subunit holoenzyme (holo-TFIIH) active in transcription. As to expression, expressed ubiquitously.

It is found in the nucleus. It carries out the reaction Couples ATP hydrolysis with the unwinding of duplex DNA by translocating in the 3'-5' direction.. It catalyses the reaction ATP + H2O = ADP + phosphate + H(+). Functionally, ATP-dependent 3'-5' DNA helicase/translocase; binds dsDNA rather than ssDNA, unzipping it in a translocase rather than classical helicase activity. Component of the general transcription and DNA repair factor IIH (TFIIH) core complex. When complexed to CDK-activating kinase (CAK), involved in RNA transcription by RNA polymerase II. The ATPase activity of XPB/ERCC3, but not its helicase activity, is required for DNA opening; it may wrap around the damaged DNA wedging it open, causing localized melting and twisting that allows XPD/ERCC2 helicase to anchor. The ATP-dependent helicase activity of XPB/ERCC3 may be required for promoter escape. Also involved in transcription-coupled nucleotide excision repair (NER) of damaged DNA. In NER, TFIIH acts by opening DNA around the lesion to allow the excision of the damaged oligonucleotide and its replacement by a new DNA fragment. The structure of the TFIIH transcription complex differs from the NER-TFIIH complex. Partially complements UV sensitivity of a yeast SSL2 mutation. The polypeptide is General transcription and DNA repair factor IIH helicase/translocase subunit XPB2 (XPB2) (Arabidopsis thaliana (Mouse-ear cress)).